Here is a 244-residue protein sequence, read N- to C-terminus: Ribosomal RNA small subunit methyltransferase NEP1 (244 aa).

The interval 1 to 33 is disordered; it reads MSAASGGFQPRERRFSVQEQDWETTPPKKLRLG. Ser5 and Ser16 each carry phosphoserine. Residues Thr176, Gly201, Gly206, and 219–224 contribute to the S-adenosyl-L-methionine site; that span reads ISNYPL.

The protein belongs to the class IV-like SAM-binding methyltransferase superfamily. RNA methyltransferase NEP1 family. Homodimer. Part of the small subunit (SSU) processome, composed of more than 70 proteins and the RNA chaperone small nucleolar RNA (snoRNA) U3.

It localises to the nucleus. The protein resides in the nucleolus. The catalysed reaction is pseudouridine(1248) in human 18S rRNA + S-adenosyl-L-methionine = N(1)-methylpseudouridine(1248) in human 18S rRNA + S-adenosyl-L-homocysteine + H(+). In terms of biological role, S-adenosyl-L-methionine-dependent pseudouridine N(1)-methyltransferase that methylates pseudouridine at position in 18S rRNA. Involved the biosynthesis of the hypermodified N1-methyl-N3-(3-amino-3-carboxypropyl) pseudouridine (m1acp3-Psi) conserved in eukaryotic 18S rRNA. Is not able to methylate uridine at this position. Also has an essential role in 40S ribosomal subunit biogenesis independent on its methyltransferase activity, facilitating the incorporation of ribosomal protein S19 during the formation of pre-ribosomes. Part of the small subunit (SSU) processome, first precursor of the small eukaryotic ribosomal subunit. During the assembly of the SSU processome in the nucleolus, many ribosome biogenesis factors, an RNA chaperone and ribosomal proteins associate with the nascent pre-rRNA and work in concert to generate RNA folding, modifications, rearrangements and cleavage as well as targeted degradation of pre-ribosomal RNA by the RNA exosome. The polypeptide is Ribosomal RNA small subunit methyltransferase NEP1 (Mus musculus (Mouse)).